A 166-amino-acid polypeptide reads, in one-letter code: Seed allergenic protein RAG2 (166 aa).

A signal peptide spans 1-26 (MASNKVVFSALLLIIVSVLAATATMA). Intrachain disulfides connect Cys41/Cys93, Cys55/Cys81, Cys63/Cys125, Cys82/Cys141, and Cys95/Cys153. Asn147 is a glycosylation site (N-linked (GlcNAc...) asparagine).

It belongs to the cereal trypsin/alpha-amylase inhibitor family. Five disulfide bonds are present.

It localises to the secreted. In terms of biological role, seed storage protein. The protein is Seed allergenic protein RAG2 (RAG2) of Oryza sativa subsp. japonica (Rice).